Here is a 497-residue protein sequence, read N- to C-terminus: Cytochrome P450 2D6 (497 aa).

D301 lines the substrate pocket. C443 contacts heme.

It belongs to the cytochrome P450 family. Heme serves as cofactor.

It is found in the endoplasmic reticulum membrane. The protein localises to the microsome membrane. It carries out the reaction (5Z,8Z,11Z,14Z)-eicosatetraenoate + reduced [NADPH--hemoprotein reductase] + O2 = (8R,9S)-epoxy-(5Z,11Z,14Z)-eicosatrienoate + oxidized [NADPH--hemoprotein reductase] + H2O + H(+). The catalysed reaction is (5Z,8Z,11Z,14Z)-eicosatetraenoate + reduced [NADPH--hemoprotein reductase] + O2 = (11R,12S)-epoxy-(5Z,8Z,14Z)-eicosatrienoate + oxidized [NADPH--hemoprotein reductase] + H2O + H(+). The enzyme catalyses (5Z,8Z,11Z,14Z)-eicosatetraenoate + reduced [NADPH--hemoprotein reductase] + O2 = (14S,15R)-epoxy-(5Z,8Z,11Z)-eicosatrienoate + oxidized [NADPH--hemoprotein reductase] + H2O + H(+). It catalyses the reaction N-(5Z,8Z,11Z,14Z-eicosatetraenoyl)-ethanolamine + reduced [NADPH--hemoprotein reductase] + O2 = N-(8,9-epoxy-5Z,11Z,14Z-eicosatrienoyl)-ethanolamine + oxidized [NADPH--hemoprotein reductase] + H2O + H(+). It carries out the reaction N-(5Z,8Z,11Z,14Z-eicosatetraenoyl)-ethanolamine + reduced [NADPH--hemoprotein reductase] + O2 = N-(11,12-epoxy-5Z,8Z,14Z-eicosatrienoyl)-ethanolamine + oxidized [NADPH--hemoprotein reductase] + H2O + H(+). The catalysed reaction is N-(5Z,8Z,11Z,14Z-eicosatetraenoyl)-ethanolamine + reduced [NADPH--hemoprotein reductase] + O2 = N-(14,15-epoxy-5Z,8Z,11Z-eicosatrienoyl)-ethanolamine + oxidized [NADPH--hemoprotein reductase] + H2O + H(+). The enzyme catalyses N-(5Z,8Z,11Z,14Z-eicosatetraenoyl)-ethanolamine + reduced [NADPH--hemoprotein reductase] + O2 = N-(20-hydroxy-5Z,8Z,11Z,14Z-eicosatetraenoyl)-ethanolamine + oxidized [NADPH--hemoprotein reductase] + H2O + H(+). It catalyses the reaction (5Z,8Z,11Z,14Z,17Z)-eicosapentaenoate + reduced [NADPH--hemoprotein reductase] + O2 = (17S,18R)-epoxy-(5Z,8Z,11Z,14Z)-eicosatetraenoate + oxidized [NADPH--hemoprotein reductase] + H2O + H(+). It carries out the reaction (4Z,7Z,10Z,13Z,16Z,19Z)-docosahexaenoate + reduced [NADPH--hemoprotein reductase] + O2 = (19R,20S)-epoxy-(4Z,7Z,10Z,13Z,16Z)-docosapentaenoate + oxidized [NADPH--hemoprotein reductase] + H2O + H(+). The catalysed reaction is (4Z,7Z,10Z,13Z,16Z,19Z)-docosahexaenoate + reduced [NADPH--hemoprotein reductase] + O2 = (19S,20R)-epoxy-(4Z,7Z,10Z,13Z,16Z)-docosapentaenoate + oxidized [NADPH--hemoprotein reductase] + H2O + H(+). The enzyme catalyses cholesterol + reduced [NADPH--hemoprotein reductase] + O2 = 25-hydroxycholesterol + oxidized [NADPH--hemoprotein reductase] + H2O + H(+). It catalyses the reaction all-trans-retinol + reduced [NADPH--hemoprotein reductase] + O2 = all-trans-retinal + oxidized [NADPH--hemoprotein reductase] + 2 H2O + H(+). It functions in the pathway cofactor metabolism; retinol metabolism. It participates in lipid metabolism; fatty acid metabolism. Its pathway is steroid metabolism; cholesterol metabolism. In terms of biological role, a cytochrome P450 monooxygenase involved in the metabolism of fatty acids, steroids and retinoids. Mechanistically, uses molecular oxygen inserting one oxygen atom into a substrate, and reducing the second into a water molecule, with two electrons provided by NADPH via cytochrome P450 reductase (NADPH--hemoprotein reductase). Catalyzes the epoxidation of double bonds of polyunsaturated fatty acids (PUFA). Metabolizes endocannabinoid arachidonoylethanolamide (anandamide) to 20-hydroxyeicosatetraenoic acid ethanolamide (20-HETE-EA) and 8,9-, 11,12-, and 14,15-epoxyeicosatrienoic acid ethanolamides (EpETrE-EAs), potentially modulating endocannabinoid system signaling. Catalyzes the hydroxylation of carbon-hydrogen bonds. Metabolizes cholesterol toward 25-hydroxycholesterol, a physiological regulator of cellular cholesterol homeostasis. Catalyzes the oxidative transformations of all-trans retinol to all-trans retinal, a precursor for the active form all-trans-retinoic acid. Also involved in the oxidative metabolism of drugs such as antiarrhythmics, adrenoceptor antagonists, and tricyclic antidepressants. In Pan paniscus (Pygmy chimpanzee), this protein is Cytochrome P450 2D6 (CYP2D6).